A 225-amino-acid chain; its full sequence is Proteoglycan 3 (225 aa).

The first 17 residues, M1 to A17, serve as a signal peptide directing secretion. Residues C107–S224 enclose the C-type lectin domain. Cystine bridges form between C128-C223 and C200-C215.

In terms of tissue distribution, expressed in bone marrow. Not detected in placenta.

The protein localises to the cytoplasmic granule. Possesses similar cytotoxic and cytostimulatory activities to PRG2/MBP. In vitro, stimulates neutrophil superoxide production and IL8 release, and histamine and leukotriene C4 release from basophils. The sequence is that of Proteoglycan 3 from Homo sapiens (Human).